The primary structure comprises 265 residues: 3-methyl-2-oxobutanoate hydroxymethyltransferase (265 aa).

Mg(2+) contacts are provided by D44 and D83. 3-methyl-2-oxobutanoate-binding positions include 44–45 (DS), D83, and K113. E115 is a Mg(2+) binding site. E183 acts as the Proton acceptor in catalysis.

Belongs to the PanB family. Homodecamer; pentamer of dimers. It depends on Mg(2+) as a cofactor.

Its subcellular location is the cytoplasm. The catalysed reaction is 3-methyl-2-oxobutanoate + (6R)-5,10-methylene-5,6,7,8-tetrahydrofolate + H2O = 2-dehydropantoate + (6S)-5,6,7,8-tetrahydrofolate. Its pathway is cofactor biosynthesis; (R)-pantothenate biosynthesis; (R)-pantoate from 3-methyl-2-oxobutanoate: step 1/2. In terms of biological role, catalyzes the reversible reaction in which hydroxymethyl group from 5,10-methylenetetrahydrofolate is transferred onto alpha-ketoisovalerate to form ketopantoate. This Leptospira borgpetersenii serovar Hardjo-bovis (strain JB197) protein is 3-methyl-2-oxobutanoate hydroxymethyltransferase.